Reading from the N-terminus, the 211-residue chain is Interleukin-6 (211 aa).

An N-terminal signal peptide occupies residues 1–29 (MNSLSTSAFSPVAFSLGLLLVMATAFPTP). Cysteine 71 and cysteine 77 form a disulfide bridge. Serine 80 carries the post-translational modification Phosphoserine. Cysteine 100 and cysteine 110 are oxidised to a cystine.

This sequence belongs to the IL-6 superfamily. Component of a hexamer of two molecules each of IL6, IL6R and IL6ST; first binds to IL6R to associate with the signaling subunit IL6ST. Interacts with IL6R (via the N-terminal ectodomain); this interaction may be affected by IL6R-binding with SORL1, hence decreasing IL6 cis signaling. Interacts with SORL1 (via the N-terminal ectodomain); this interaction leads to IL6 internalization and lysosomal degradation. May form a trimeric complex with the soluble SORL1 ectodomain and soluble IL6R receptor; this interaction might stabilize circulating IL6, hence promoting IL6 trans signaling.

It is found in the secreted. Its function is as follows. Cytokine with a wide variety of biological functions in immunity, tissue regeneration, and metabolism. Binds to IL6R, then the complex associates to the signaling subunit IL6ST/gp130 to trigger the intracellular IL6-signaling pathway. The interaction with the membrane-bound IL6R and IL6ST stimulates 'classic signaling', whereas the binding of IL6 and soluble IL6R to IL6ST stimulates 'trans-signaling'. Alternatively, 'cluster signaling' occurs when membrane-bound IL6:IL6R complexes on transmitter cells activate IL6ST receptors on neighboring receiver cells. In terms of biological role, IL6 is a potent inducer of the acute phase response. Rapid production of IL6 contributes to host defense during infection and tissue injury, but excessive IL6 synthesis is involved in disease pathology. In the innate immune response, is synthesized by myeloid cells, such as macrophages and dendritic cells, upon recognition of pathogens through toll-like receptors (TLRs) at the site of infection or tissue injury. In the adaptive immune response, is required for the differentiation of B cells into immunoglobulin-secreting cells. Plays a major role in the differentiation of CD4(+) T cell subsets. Essential factor for the development of T follicular helper (Tfh) cells that are required for the induction of germinal-center formation. Required to drive naive CD4(+) T cells to the Th17 lineage. Also required for proliferation of myeloma cells and the survival of plasmablast cells. Functionally, acts as an essential factor in bone homeostasis and on vessels directly or indirectly by induction of VEGF, resulting in increased angiogenesis activity and vascular permeability. Induces, through 'trans-signaling' and synergistically with IL1B and TNF, the production of VEGF. Involved in metabolic controls, is discharged into the bloodstream after muscle contraction increasing lipolysis and improving insulin resistance. 'Trans-signaling' in central nervous system also regulates energy and glucose homeostasis. Mediates, through GLP-1, crosstalk between insulin-sensitive tissues, intestinal L cells and pancreatic islets to adapt to changes in insulin demand. Also acts as a myokine. Plays a protective role during liver injury, being required for maintenance of tissue regeneration. Also has a pivotal role in iron metabolism by regulating HAMP/hepcidin expression upon inflammation or bacterial infection. Through activation of IL6ST-YAP-NOTCH pathway, induces inflammation-induced epithelial regeneration. This Camelus bactrianus (Bactrian camel) protein is Interleukin-6 (IL6).